We begin with the raw amino-acid sequence, 109 residues long: MTPRSLPRYGNSSRRKSFPMHRPSNVATATRKKSSIGWVLLACSVAGCKGIDTTEFILGRAGAFELAVRAAQHRHRYLTMVNVGRAPPRRCRTVCMAATDTPRNIRLNG.

The interval 1-26 is disordered; that stretch reads MTPRSLPRYGNSSRRKSFPMHRPSNV.

This is an uncharacterized protein from Mycobacterium bovis (strain ATCC BAA-935 / AF2122/97).